The chain runs to 200 residues: ATP-dependent Clp protease proteolytic subunit (200 aa).

Serine 102 acts as the Nucleophile in catalysis. Residue histidine 127 is part of the active site.

It belongs to the peptidase S14 family. Fourteen ClpP subunits assemble into 2 heptameric rings which stack back to back to give a disk-like structure with a central cavity, resembling the structure of eukaryotic proteasomes.

Its subcellular location is the cytoplasm. The enzyme catalyses Hydrolysis of proteins to small peptides in the presence of ATP and magnesium. alpha-casein is the usual test substrate. In the absence of ATP, only oligopeptides shorter than five residues are hydrolyzed (such as succinyl-Leu-Tyr-|-NHMec, and Leu-Tyr-Leu-|-Tyr-Trp, in which cleavage of the -Tyr-|-Leu- and -Tyr-|-Trp bonds also occurs).. Functionally, cleaves peptides in various proteins in a process that requires ATP hydrolysis. Has a chymotrypsin-like activity. Plays a major role in the degradation of misfolded proteins. The protein is ATP-dependent Clp protease proteolytic subunit of Dehalococcoides mccartyi (strain ATCC BAA-2266 / KCTC 15142 / 195) (Dehalococcoides ethenogenes (strain 195)).